The sequence spans 149 residues: MARPRKEAPQRNLDRDENARQQPTEEPQDEAPRNQGRQQQQQRPPAAPRRPRRFRPGTVALREIRRIQRSNVPLIPHSPFMRLVRELAAEFLDDCRFAAETFIMLKEVVEDELVNHFGNVQICSIHAKRIIITVKDFKLAKLLKGEPED.

The segment covering 1-19 has biased composition (basic and acidic residues); sequence MARPRKEAPQRNLDRDENA. Positions 1–58 are disordered; it reads MARPRKEAPQRNLDRDENARQQPTEEPQDEAPRNQGRQQQQQRPPAAPRRPRRFRPGT. Residues 33–44 are compositionally biased toward low complexity; the sequence is RNQGRQQQQQRP.

This sequence belongs to the histone H3 family. As to quaternary structure, the nucleosome is a histone octamer containing two molecules each of H2A, H2B, H3 and H4 assembled in one H3-H4 heterotetramer and two H2A-H2B heterodimers. The octamer wraps approximately 147 bp of DNA. In terms of tissue distribution, pollen specific.

Its subcellular location is the nucleus. The protein localises to the chromosome. Its function is as follows. Core component of nucleosome. Nucleosomes wrap and compact DNA into chromatin, limiting DNA accessibility to the cellular machineries which require DNA as a template. Histones thereby play a central role in transcription regulation, DNA repair, DNA replication and chromosomal stability. DNA accessibility is regulated via a complex set of post-translational modifications of histones, also called histone code, and nucleosome remodeling. The sequence is that of Histone H3-like 1 (gH3) from Lilium longiflorum (Trumpet lily).